Here is a 204-residue protein sequence, read N- to C-terminus: bMERB domain-containing protein 1 (204 aa).

In terms of domain architecture, bMERB spans 3-150; sequence LKQSLSTHLE…EQEEDKEMAD (148 aa). The segment at 162-187 is disordered; it reads VTKSPASSRAEKKAEPPPSKPTVAKT.

This Pongo abelii (Sumatran orangutan) protein is bMERB domain-containing protein 1 (BMERB1).